The sequence spans 405 residues: Angiopoietin-related protein 4 (405 aa).

A signal peptide spans 1-23; sequence MRCAPTAGAALVLCAATAGLLSA. A coiled-coil region spans residues 54-146; that stretch reads GLREHVERTR…QNLQSQIDLL (93 aa). N-linked (GlcNAc...) asparagine glycosylation is present at asparagine 176. The 223-residue stretch at 178-400 folds into the Fibrinogen C-terminal domain; the sequence is TRLHRPPRDC…ATTLLIQPME (223 aa). Cysteine 187 and cysteine 215 are oxidised to a cystine. Asparagine 231 and asparagine 237 each carry an N-linked (GlcNAc...) asparagine glycan. Cysteines 340 and 353 form a disulfide.

As to quaternary structure, homooligomer; disulfide-linked via Cys residues in the N-terminal part of the protein. The homooligomer undergoes proteolytic processing to release its carboxyl fibrinogen-like domain, which circulates as a monomer. The homooligomer unprocessed form is able to interact with the extracellular matrix. N-glycosylated. In terms of processing, forms disulfide-linked dimers and tetramers. Post-translationally, cleaved into a smaller N-terminal chain and a larger chain that contains the fibrinogen C-terminal domain; both cleaved and uncleaved forms are detected in the extracellular space. The cleaved form is not present within the cell.

The protein resides in the secreted. It localises to the extracellular space. It is found in the extracellular matrix. Its function is as follows. Mediates inactivation of the lipoprotein lipase LPL, and thereby plays a role in the regulation of triglyceride clearance from the blood serum and in lipid metabolism. May also play a role in regulating glucose homeostasis and insulin sensitivity. Inhibits proliferation, migration, and tubule formation of endothelial cells and reduces vascular leakage. Upon heterologous expression, inhibits the adhesion of endothelial cell to the extracellular matrix (ECM), and inhibits the reorganization of the actin cytoskeleton, formation of actin stress fibers and focal adhesions in endothelial cells that have adhered to ANGPTL4-containing ECM (in vitro). Depending on context, may modulate tumor-related angiogenesis. Mediates inactivation of the lipoprotein lipase LPL, and thereby plays an important role in the regulation of triglyceride clearance from the blood serum and in lipid metabolism. Has higher activity in LPL inactivation than the uncleaved protein. The chain is Angiopoietin-related protein 4 (Angptl4) from Rattus norvegicus (Rat).